A 119-amino-acid chain; its full sequence is Large ribosomal subunit protein bL20 (119 aa).

Belongs to the bacterial ribosomal protein bL20 family.

Binds directly to 23S ribosomal RNA and is necessary for the in vitro assembly process of the 50S ribosomal subunit. It is not involved in the protein synthesizing functions of that subunit. The protein is Large ribosomal subunit protein bL20 of Enterococcus faecalis (strain ATCC 700802 / V583).